A 165-amino-acid chain; its full sequence is MAGRLDEDLKDVTLLGNQNTKYLFEYSPKILEVFDNNHPNRDYFVKFNCPEFTSLCPKTGQPDFATIYISYIPEQRMVESKSLKLYLFSFRNHGDFHEDCMNVIMNDLIKLMDPRYIEVWGKFTPRGGISIDPYCNYGRPGTKYEQMADYRMMNHDLYPETIDNR.

Residue C56 is the Thioimide intermediate of the active site. Residue D63 is the Proton donor of the active site. Substrate is bound by residues 78-80 and 97-98; these read VES and HE.

The protein belongs to the GTP cyclohydrolase I family. QueF type 1 subfamily.

It is found in the cytoplasm. It catalyses the reaction 7-aminomethyl-7-carbaguanine + 2 NADP(+) = 7-cyano-7-deazaguanine + 2 NADPH + 3 H(+). It participates in tRNA modification; tRNA-queuosine biosynthesis. In terms of biological role, catalyzes the NADPH-dependent reduction of 7-cyano-7-deazaguanine (preQ0) to 7-aminomethyl-7-deazaguanine (preQ1). The sequence is that of NADPH-dependent 7-cyano-7-deazaguanine reductase from Bacillus thuringiensis subsp. konkukian (strain 97-27).